Reading from the N-terminus, the 209-residue chain is Protein GrpE (209 aa).

The segment covering 1–13 (MSNDSSKAKQNQV) has biased composition (polar residues). The disordered stretch occupies residues 1–33 (MSNDSSKAKQNQVDEAVEGEILTESEVETGNDE). A compositionally biased stretch (acidic residues) spans 15-31 (EAVEGEILTESEVETGN).

The protein belongs to the GrpE family. In terms of assembly, homodimer.

It is found in the cytoplasm. Its function is as follows. Participates actively in the response to hyperosmotic and heat shock by preventing the aggregation of stress-denatured proteins, in association with DnaK and GrpE. It is the nucleotide exchange factor for DnaK and may function as a thermosensor. Unfolded proteins bind initially to DnaJ; upon interaction with the DnaJ-bound protein, DnaK hydrolyzes its bound ATP, resulting in the formation of a stable complex. GrpE releases ADP from DnaK; ATP binding to DnaK triggers the release of the substrate protein, thus completing the reaction cycle. Several rounds of ATP-dependent interactions between DnaJ, DnaK and GrpE are required for fully efficient folding. The protein is Protein GrpE of Shewanella woodyi (strain ATCC 51908 / MS32).